The following is a 317-amino-acid chain: Beta-ketoacyl-[acyl-carrier-protein] synthase III (317 aa).

Active-site residues include cysteine 112 and histidine 244. The ACP-binding stretch occupies residues 245–249 (QANLR). Asparagine 274 is an active-site residue.

Belongs to the thiolase-like superfamily. FabH family. Homodimer.

It is found in the cytoplasm. It catalyses the reaction malonyl-[ACP] + acetyl-CoA + H(+) = 3-oxobutanoyl-[ACP] + CO2 + CoA. The protein operates within lipid metabolism; fatty acid biosynthesis. Catalyzes the condensation reaction of fatty acid synthesis by the addition to an acyl acceptor of two carbons from malonyl-ACP. Catalyzes the first condensation reaction which initiates fatty acid synthesis and may therefore play a role in governing the total rate of fatty acid production. Possesses both acetoacetyl-ACP synthase and acetyl transacylase activities. Its substrate specificity determines the biosynthesis of branched-chain and/or straight-chain of fatty acids. The sequence is that of Beta-ketoacyl-[acyl-carrier-protein] synthase III from Salmonella paratyphi B (strain ATCC BAA-1250 / SPB7).